The sequence spans 406 residues: SEC14-like protein 4 (406 aa).

The region spanning 76–249 is the CRAL-TRIO domain; it reads PPEVIQLYDS…EFGGTMTDPD (174 aa). In terms of domain architecture, GOLD spans 252 to 383; the sequence is PKCLTKINYG…AKKLSYTVEV (132 aa).

Functionally, probable hydrophobic ligand-binding protein; may play a role in the transport of hydrophobic ligands like tocopherol, squalene and phospholipids. The sequence is that of SEC14-like protein 4 (SEC14L4) from Homo sapiens (Human).